Here is a 601-residue protein sequence, read N- to C-terminus: MSSDSMRNIRNFSIIAHVDHGKSTLADRIIQLCGGLQAREMEAQVLDSNPIERERGITIKAQSVSLPYTAKDGQVYHLNFIDTPGHVDFSYEVSRSLAACEGALLVVDAAQGVEAQSVANCYTAVEQGLEVVPVLNKIDLPTADVDRAKAEIEAVIGIDAEDAVAVSAKTGLNIDLVLEAIVHRIPPPAPRDTDKLQALIIDSWFDNYLGVVSLVRVMQGEIKPGSKILVMSTGRTHLVDKVGVFTPKRKELSALGAGEVGWINASIKDVHGAPVGDTLTLAADPAPHALPGFQEMQPRVFAGLFPVDAEDYPDLREALDKLRLNDAALRFEPESSEAMGFGFRCGFLGMLHMEIVQERLEREYNLNLISTAPTVVYEVLKTDGSVIPMDNPSKLPPLNNVEEIREPIIRANILTPPDYVGNIITLCEEKRGSQIGINYLGSQVQISYELPMAEVVLDFFDKLKSVSRGYASLDYHFLRFDPGPFVRVDTLINGDKVDALSIIVHRSYADRRGRELCEKMKDLIPRQMFDVAIQAAVGSQIISRSTVKAMRKNVLAKCYGGDVSRKKKLLEKQKEGKKRMKQVGRVEIPQEAFLAVLQMDK.

The 183-residue stretch at arginine 7–alanine 189 folds into the tr-type G domain. GTP is bound by residues aspartate 19–threonine 24 and asparagine 136–aspartate 139.

It belongs to the TRAFAC class translation factor GTPase superfamily. Classic translation factor GTPase family. LepA subfamily.

The protein resides in the cell inner membrane. The enzyme catalyses GTP + H2O = GDP + phosphate + H(+). Functionally, required for accurate and efficient protein synthesis under certain stress conditions. May act as a fidelity factor of the translation reaction, by catalyzing a one-codon backward translocation of tRNAs on improperly translocated ribosomes. Back-translocation proceeds from a post-translocation (POST) complex to a pre-translocation (PRE) complex, thus giving elongation factor G a second chance to translocate the tRNAs correctly. Binds to ribosomes in a GTP-dependent manner. The sequence is that of Elongation factor 4 from Xanthomonas oryzae pv. oryzae (strain MAFF 311018).